Consider the following 510-residue polypeptide: NAD(P)H-quinone oxidoreductase subunit 2, chloroplastic (510 aa).

13 consecutive transmembrane segments (helical) span residues 24–44 (LLLFHGSFIFPECILIFGLIL), 59–79 (WFYFISSTSLVMSITALLFRW), 99–119 (IFQFLILLCSTLCIPLSVEYI), 124–144 (MAITEFLLFVLTATLGGMFLC), 149–169 (LITIFVAPECFSLCSYLLSGY), 183–203 (YLLMGGASSSILVHGFSWLYG), 229–249 (ISIALISITVGIGFKLSPAPF), 295–315 (WHLLLEILAILSMILGNLIAI), 323–343 (MLAYSSIGQIGYVIIGIIVGD), 354–374 (YMLFYISMNLGTFACIVSFGL), 395–415 (ALSLALCLLSLGGLPPLAGFF), 418–438 (LYLFWCGWQAGLYFLVSMGLL), and 484–504 (MTVCVIASTIPGISMNPILAI).

Belongs to the complex I subunit 2 family. NDH is composed of at least 16 different subunits, 5 of which are encoded in the nucleus.

Its subcellular location is the plastid. It localises to the chloroplast thylakoid membrane. It catalyses the reaction a plastoquinone + NADH + (n+1) H(+)(in) = a plastoquinol + NAD(+) + n H(+)(out). It carries out the reaction a plastoquinone + NADPH + (n+1) H(+)(in) = a plastoquinol + NADP(+) + n H(+)(out). In terms of biological role, NDH shuttles electrons from NAD(P)H:plastoquinone, via FMN and iron-sulfur (Fe-S) centers, to quinones in the photosynthetic chain and possibly in a chloroplast respiratory chain. The immediate electron acceptor for the enzyme in this species is believed to be plastoquinone. Couples the redox reaction to proton translocation, and thus conserves the redox energy in a proton gradient. The sequence is that of NAD(P)H-quinone oxidoreductase subunit 2, chloroplastic from Sisyrinchium montanum (Strict blue-eyed grass).